Reading from the N-terminus, the 472-residue chain is 3-isopropylmalate dehydratase large subunit (472 aa).

[4Fe-4S] cluster-binding residues include C347, C407, and C410.

The protein belongs to the aconitase/IPM isomerase family. LeuC type 1 subfamily. As to quaternary structure, heterodimer of LeuC and LeuD. Requires [4Fe-4S] cluster as cofactor.

It carries out the reaction (2R,3S)-3-isopropylmalate = (2S)-2-isopropylmalate. Its pathway is amino-acid biosynthesis; L-leucine biosynthesis; L-leucine from 3-methyl-2-oxobutanoate: step 2/4. Catalyzes the isomerization between 2-isopropylmalate and 3-isopropylmalate, via the formation of 2-isopropylmaleate. The sequence is that of 3-isopropylmalate dehydratase large subunit from Bacillus velezensis (strain DSM 23117 / BGSC 10A6 / LMG 26770 / FZB42) (Bacillus amyloliquefaciens subsp. plantarum).